We begin with the raw amino-acid sequence, 145 residues long: Plastocyanin, chloroplastic (145 aa).

Residues 1–48 (MASLMRKAAVAPAKATRTTVKASASLQRVAQAAGVAVAGFSLALSANA) constitute a chloroplast transit peptide. A Plastocyanin-like domain is found at 49–145 (ANVKLGADSG…AGMVGKVIVQ (97 aa)). Cu cation is bound by residues His-85, Cys-130, His-133, and Met-138.

It belongs to the plastocyanin family. The cofactor is Cu(2+).

It localises to the plastid. It is found in the chloroplast thylakoid membrane. Participates in electron transfer between P700 and the cytochrome b6-f complex in photosystem I. In Tetradesmus obliquus (Green alga), this protein is Plastocyanin, chloroplastic (PETE).